Here is a 452-residue protein sequence, read N- to C-terminus: Caspase-2 (452 aa).

The residue at position 2 (Ala2) is an N-acetylalanine. A propeptide spanning residues 2–169 is cleaved from the precursor; sequence AASSGRSQSS…TMEHSLDNGD (168 aa). The 90-residue stretch at 32 to 121 folds into the CARD domain; it reads MHPDHQETLK…GHLEDLLLTT (90 aa). Ser157 bears the Phosphoserine mark. Residues His277 and Cys320 contribute to the active site. A propeptide spanning residues 326–333 is cleaved from the precursor; sequence DRGVDQQD. The span at 327-336 shows a compositional bias: basic and acidic residues; that stretch reads RGVDQQDGKN. A disordered region spans residues 327–349; it reads RGVDQQDGKNHAQSPGCEESDAG. Ser340 bears the Phosphoserine mark.

The protein belongs to the peptidase C14A family. Heterotetramer that consists of two anti-parallel arranged heterodimers, each one formed by a p18 subunit and a p12 subunit. Forms a complex named the PIDDosome with PIDD1 and CRADD. Interacts with NOL3 (via CARD domain); inhibits CASP2 activity in a phosphorylation-dependent manner. In terms of processing, the mature protease can process its own propeptide, but not that of other caspases.

The catalysed reaction is Strict requirement for an Asp residue at P1, with 316-Asp being essential for proteolytic activity and has a preferred cleavage sequence of Val-Asp-Val-Ala-Asp-|-.. Its function is as follows. Involved in the activation cascade of caspases responsible for apoptosis execution. Might function by either activating some proteins required for cell death or inactivating proteins necessary for cell survival. Associates with PIDD1 and CRADD to form the PIDDosome, a complex that activates CASP2 and triggers apoptosis in response to genotoxic stress. In Rattus norvegicus (Rat), this protein is Caspase-2 (Casp2).